The following is a 318-amino-acid chain: Pyrimidine-specific ribonucleoside hydrolase RihA (318 aa).

Residue H240 is part of the active site.

The protein belongs to the IUNH family. RihA subfamily.

Its function is as follows. Hydrolyzes cytidine or uridine to ribose and cytosine or uracil, respectively. This chain is Pyrimidine-specific ribonucleoside hydrolase RihA, found in Shewanella baltica (strain OS185).